Reading from the N-terminus, the 941-residue chain is Endoplasmic reticulum aminopeptidase 1 (941 aa).

Methionine 1 is a topological domain (cytoplasmic). A helical; Signal-anchor for type II membrane protein transmembrane segment spans residues 2–21 (VFLPLKWSLATMSFLLSSLL). Residues 22 to 941 (ALLTVSTPSW…WLQSEKLERM (920 aa)) lie on the Lumenal side of the membrane. N-linked (GlcNAc...) asparagine glycans are attached at residues asparagine 70 and asparagine 154. Residues glutamate 183 and 317–321 (GAMEN) contribute to the substrate site. Residue histidine 353 coordinates Zn(2+). Glutamate 354 acts as the Proton acceptor in catalysis. Residues histidine 357 and glutamate 376 each contribute to the Zn(2+) site. Cystine bridges form between cysteine 404–cysteine 443 and cysteine 736–cysteine 743. N-linked (GlcNAc...) asparagine glycosylation is present at asparagine 414. 2 N-linked (GlcNAc...) asparagine glycosylation sites follow: asparagine 760 and asparagine 901.

It belongs to the peptidase M1 family. Monomer. May also exist as a heterodimer; with ERAP2. Interacts with RBMX. It depends on Zn(2+) as a cofactor. In terms of processing, N-glycosylated. As to expression, ubiquitous.

It is found in the endoplasmic reticulum membrane. Functionally, aminopeptidase that plays a central role in peptide trimming, a step required for the generation of most HLA class I-binding peptides. Peptide trimming is essential to customize longer precursor peptides to fit them to the correct length required for presentation on MHC class I molecules. Strongly prefers substrates 9-16 residues long. Rapidly degrades 13-mer to a 9-mer and then stops. Preferentially hydrolyzes the residue Leu and peptides with a hydrophobic C-terminus, while it has weak activity toward peptides with charged C-terminus. May play a role in the inactivation of peptide hormones. May be involved in the regulation of blood pressure through the inactivation of angiotensin II and/or the generation of bradykinin in the kidney. This is Endoplasmic reticulum aminopeptidase 1 (ERAP1) from Homo sapiens (Human).